The following is a 1157-amino-acid chain: Nitric oxide synthase, inducible (1157 aa).

The DINNN-motif; mediates interaction with SPSB1, SPSB2 and SPSB4 motif lies at 23 to 27; that stretch reads DINNN. A disordered region spans residues 29 to 64; that stretch reads EKLRQASSSPVTQDDPKCPSRSRHRNECSQPLAETA. Zn(2+) contacts are provided by Cys-110 and Cys-115. Cys-200 contacts heme b. Residues Gln-263, Trp-372, Tyr-373, and Glu-377 each coordinate L-arginine. (6R)-L-erythro-5,6,7,8-tetrahydrobiopterin contacts are provided by Arg-381, Ile-462, Trp-463, and Phe-476. Residue Tyr-491 participates in heme b binding. The calmodulin-binding stretch occupies residues 515–535; it reads FKVLVKAVLFAAVLMHKTMAA. In terms of domain architecture, Flavodoxin-like spans 539–677; the sequence is ATILFATETG…AFRGWAVQTF (139 aa). Thr-545, Glu-546, Thr-547, Arg-549, Ser-550, Ser-591, Thr-592, Ser-628, Cys-635, Glu-661, and Gln-665 together coordinate FMN. The FAD-binding FR-type domain occupies 730-970; that stretch reads KYVFSMRLKS…VRSASGFQLP (241 aa). Arg-750 is a binding site for NADP(+). FAD contacts are provided by His-772, Arg-906, Tyr-908, Ser-909, Thr-924, and Ala-926. Thr-929 contacts NADP(+). FAD is bound by residues Tyr-930, Val-943, Cys-944, and Ser-945. Thr-984, Arg-1017, Ser-1046, Arg-1047, Lys-1053, Tyr-1055, Gln-1057, and Asp-1090 together coordinate NADP(+). The tract at residues 1138 to 1157 is disordered; sequence KEGAVGPPSDPRAPGAHGKS.

It belongs to the NOS family. As to quaternary structure, homodimer. Interacts with NHERF1. Interacts with GAPDH; induced by oxidatively-modified low-densitity lipoprotein (LDL(ox)). Interacts with S100A8 and S100A9 to form the iNOS-S100A8/9 transnitrosylase complex. Interacts with SPSB1, SPSB2 and SPSB4. Interacts with ELOC and CUL5 in the presence of SPSB1 or SPSB2 or SPSB4. Forms a complex with ASL, ASS1 and HSP90AA1; the complex regulates cell-autonomous L-arginine synthesis and citrulline recycling while channeling extracellular L-arginine to nitric oxide synthesis pathway. Requires heme b as cofactor. FAD serves as cofactor. FMN is required as a cofactor. It depends on (6R)-L-erythro-5,6,7,8-tetrahydrobiopterin as a cofactor. Post-translationally, polyubiquitinated; mediated by SPSB1, SPSB2 and SPSB4, leading to proteasomal degradation. In terms of tissue distribution, detected in both stimulated and unstimulated immune cells and macrophages with little or no up-regulation following cellular stimulation with lipopolysaccharides (LPS) or concanavalin A (ConA).

It localises to the cytoplasm. The protein localises to the cytosol. It carries out the reaction 2 L-arginine + 3 NADPH + 4 O2 + H(+) = 2 L-citrulline + 2 nitric oxide + 3 NADP(+) + 4 H2O. With respect to regulation, not stimulated by calcium/calmodulin. Produces nitric oxide (NO) which is a messenger molecule with diverse functions throughout the body. In macrophages, NO mediates tumoricidal and bactericidal actions. Also has nitrosylase activity and mediates cysteine S-nitrosylation of cytoplasmic target proteins such PTGS2/COX2. As component of the iNOS-S100A8/9 transnitrosylase complex involved in the selective inflammatory stimulus-dependent S-nitrosylation of GAPDH implicated in regulation of the GAIT complex activity and probably multiple targets including ANXA5, EZR, MSN and VIM. Involved in inflammation, enhances the synthesis of pro-inflammatory mediators such as IL6 and IL8. The chain is Nitric oxide synthase, inducible (NOS2) from Sus scrofa (Pig).